A 185-amino-acid chain; its full sequence is MIIEKRELEQLPERGEIIIDADGHIAGRLATYVAKALLERPSLRIVVVNAEKLVITGDRKMVIEWFKRKISEWRTHYNPEKAGPKIPRRPDRVFKRIVRGMLPKKNMRGRSALKRLRVYMSIPLEMLNRKKLVLYEVPLAKLKVKPLAKFVTLEEVWRNIDFAAWEQWKRAQEIWQKRIKQVTGG.

It belongs to the universal ribosomal protein uL13 family. As to quaternary structure, part of the 50S ribosomal subunit.

This protein is one of the early assembly proteins of the 50S ribosomal subunit, although it is not seen to bind rRNA by itself. It is important during the early stages of 50S assembly. The sequence is that of Large ribosomal subunit protein uL13 from Pyrobaculum islandicum (strain DSM 4184 / JCM 9189 / GEO3).